The sequence spans 245 residues: Gem-associated protein 2 (245 aa).

Belongs to the gemin-2 family. In terms of assembly, component of the core survival motor neuron (SMN) complex composed of Smn, Gem2, Gem3, rig/Gem5 and one of 3 almost identical Gem4 paralogs encoded by Glos/Gem4a, Gem4b or Gem4c. Part of a minimal SMN complex composed of Smn and Gem2 only; this complex is active in UsnRNP assembly. The SMN complex associates with the entire set of spliceosomal snRNP Sm proteins, SmB, SmD1, SmD2, SmD3, SmE, SmF and SmG, and with the snRNP-specific proteins snRNP-U1-70K, U2A, snf/U1A and U5-116KD. Expressed in nurse cells and oocytes.

The protein resides in the cytoplasm. It is found in the U-body. Component of the survival motor neuron (SMN) complex that catalyzes the assembly of small nuclear ribonucleoproteins (snRNPs), the building blocks of the spliceosome, and thereby plays an important role in the splicing of cellular pre-mRNAs. Most spliceosomal snRNPs contain a common set of Sm proteins SNRPB, SNRPD1, SNRPD2, SNRPD3, SNRPE, SNRPF and SNRPG that assemble in a heptameric protein ring on the Sm site of the small nuclear RNA to form the core snRNP (Sm core). In the cytosol, the Sm proteins SNRPD1, SNRPD2, SNRPE, SNRPF and SNRPG (5Sm) are trapped in an inactive 6S pICln-Sm complex by the chaperone CLNS1A that controls the assembly of the core snRNP. To assemble core snRNPs, the SMN complex accepts the trapped 5Sm proteins from CLNS1A. Binding of snRNA inside 5Sm ultimately triggers eviction of the SMN complex, thereby allowing binding of SNRPD3 and SNRPB to complete assembly of the core snRNP. Within the SMN complex, GEMIN2 constrains the conformation of 5Sm, thereby promoting 5Sm binding to snRNA containing the snRNP code (a nonameric Sm site and a 3'-adjacent stem-loop), thus preventing progression of assembly until a cognate substrate is bound. Involved in adult motor function. The sequence is that of Gem-associated protein 2 from Drosophila melanogaster (Fruit fly).